Consider the following 1178-residue polypeptide: DNA-directed RNA polymerase subunit beta' (1178 aa).

Zn(2+)-binding residues include Cys-60, Cys-62, Cys-75, and Cys-78. Mg(2+)-binding residues include Asp-450, Asp-452, and Asp-454. Positions 795, 869, 876, and 879 each coordinate Zn(2+).

This sequence belongs to the RNA polymerase beta' chain family. The RNAP catalytic core consists of 2 alpha, 1 beta, 1 beta' and 1 omega subunit. When a sigma factor is associated with the core the holoenzyme is formed, which can initiate transcription. It depends on Mg(2+) as a cofactor. Zn(2+) is required as a cofactor.

The catalysed reaction is RNA(n) + a ribonucleoside 5'-triphosphate = RNA(n+1) + diphosphate. In terms of biological role, DNA-dependent RNA polymerase catalyzes the transcription of DNA into RNA using the four ribonucleoside triphosphates as substrates. This is DNA-directed RNA polymerase subunit beta' from Clostridium botulinum (strain ATCC 19397 / Type A).